Here is a 93-residue protein sequence, read N- to C-terminus: Putative regulatory protein Clos_1422 (93 aa).

It belongs to the RemA family.

In Alkaliphilus oremlandii (strain OhILAs) (Clostridium oremlandii (strain OhILAs)), this protein is Putative regulatory protein Clos_1422.